A 218-amino-acid chain; its full sequence is Nonsense-mediated decay protein 4 (218 aa).

The protein resides in the cytoplasm. Functionally, involved in nonsense-mediated decay of mRNAs containing premature stop codons. In Saccharomyces cerevisiae (strain ATCC 204508 / S288c) (Baker's yeast), this protein is Nonsense-mediated decay protein 4 (NMD4).